The chain runs to 122 residues: Large ribosomal subunit protein uL14 (122 aa).

The protein belongs to the universal ribosomal protein uL14 family. Part of the 50S ribosomal subunit. Forms a cluster with proteins L3 and L19. In the 70S ribosome, L14 and L19 interact and together make contacts with the 16S rRNA in bridges B5 and B8.

Functionally, binds to 23S rRNA. Forms part of two intersubunit bridges in the 70S ribosome. The protein is Large ribosomal subunit protein uL14 of Pseudothermotoga lettingae (strain ATCC BAA-301 / DSM 14385 / NBRC 107922 / TMO) (Thermotoga lettingae).